A 240-amino-acid chain; its full sequence is Pro-opiomelanocortin B (240 aa).

The first 36 residues, 1 to 36 (MFGTFLQNQSVRLNMVCAPWLLAVVVVCVCNPGVEG), serve as a signal peptide directing secretion. Glutamine 37 bears the Pyrrolidone carboxylic acid mark. A propeptide is located at residue histidine 111. The residue at position 112 (serine 112) is an N-acetylserine; in Corticotropin. At isoleucine 124 the chain carries Isoleucine amide.

It belongs to the POMC family. In terms of processing, specific enzymatic cleavages at paired basic residues yield the different active peptides. Acetylation of beta-endorphin occurs in a tissue-specific manner. As to expression, pituitary and hypothalamus of adult diploid animals.

The protein resides in the secreted. Stimulates the adrenal glands to release cortisol. In terms of biological role, melanocyte-stimulating hormone alpha: Anorexigenic peptide. Increases the pigmentation of skin by increasing melanin production in melanocytes. Functionally, melanocyte-stimulating hormone beta: Increases the pigmentation of skin by increasing melanin production in melanocytes. Its function is as follows. Beta-endorphin: Endogenous orexigenic opiate. Endogenous opiate. The chain is Pro-opiomelanocortin B (pomcb) from Oncorhynchus mykiss (Rainbow trout).